The sequence spans 706 residues: Ribosomal RNA large subunit methyltransferase K/L (706 aa).

Positions 43 to 154 (LMYQSLLWSR…RDMASVALDL (112 aa)) constitute a THUMP domain.

Belongs to the methyltransferase superfamily. RlmKL family.

The protein resides in the cytoplasm. The catalysed reaction is guanosine(2445) in 23S rRNA + S-adenosyl-L-methionine = N(2)-methylguanosine(2445) in 23S rRNA + S-adenosyl-L-homocysteine + H(+). It catalyses the reaction guanosine(2069) in 23S rRNA + S-adenosyl-L-methionine = N(2)-methylguanosine(2069) in 23S rRNA + S-adenosyl-L-homocysteine + H(+). Functionally, specifically methylates the guanine in position 2445 (m2G2445) and the guanine in position 2069 (m7G2069) of 23S rRNA. The sequence is that of Ribosomal RNA large subunit methyltransferase K/L from Yersinia pseudotuberculosis serotype IB (strain PB1/+).